The sequence spans 364 residues: MQDRQKAQDYRALLLADTPLIDVRAPIEFEQGAMPGAINLPLMMDDERAAVGTCYKRQGADAALALGHRLVCGDIRQQRLEAWKAAYQRFPNGYLCCARGGQRSHIVQRWLKETGIDCPLIEGGYKALRQTAIQATWQLAQKPILLIGGCTGSGKTQLVRQQPNGVDLEGLARHRGSSFGRTLNPQLSQASFENKLAVELLKINAHQTLKRWVLEDEGRTIGANHLPECLRERMAQAPIAVVEDPFALRLERLREEYFIRMHHDFTHAYGDEAGWQAYSEYLHHGLFAIRRRLGLQRFAELTDTLDRALAEQLSSGSTDGHMAWLVPLLNEYYDPMYRYQLEKKAANIVFRGTWQDVANWLKEQ.

A Rhodanese domain is found at 14–137; the sequence is LLADTPLIDV…LRQTAIQATW (124 aa). Residue cysteine 97 is the S-selanylcysteine intermediate of the active site.

This sequence belongs to the SelU family. In terms of assembly, monomer.

The enzyme catalyses 5-methylaminomethyl-2-thiouridine(34) in tRNA + selenophosphate + (2E)-geranyl diphosphate + H2O + H(+) = 5-methylaminomethyl-2-selenouridine(34) in tRNA + (2E)-thiogeraniol + phosphate + diphosphate. It catalyses the reaction 5-methylaminomethyl-2-thiouridine(34) in tRNA + (2E)-geranyl diphosphate = 5-methylaminomethyl-S-(2E)-geranyl-thiouridine(34) in tRNA + diphosphate. It carries out the reaction 5-methylaminomethyl-S-(2E)-geranyl-thiouridine(34) in tRNA + selenophosphate + H(+) = 5-methylaminomethyl-2-(Se-phospho)selenouridine(34) in tRNA + (2E)-thiogeraniol. The catalysed reaction is 5-methylaminomethyl-2-(Se-phospho)selenouridine(34) in tRNA + H2O = 5-methylaminomethyl-2-selenouridine(34) in tRNA + phosphate. Involved in the post-transcriptional modification of the uridine at the wobble position (U34) of tRNA(Lys), tRNA(Glu) and tRNA(Gln). Catalyzes the conversion of 2-thiouridine (S2U-RNA) to 2-selenouridine (Se2U-RNA). Acts in a two-step process involving geranylation of 2-thiouridine (S2U) to S-geranyl-2-thiouridine (geS2U) and subsequent selenation of the latter derivative to 2-selenouridine (Se2U) in the tRNA chain. This Salmonella paratyphi A (strain ATCC 9150 / SARB42) protein is tRNA 2-selenouridine synthase.